Reading from the N-terminus, the 629-residue chain is 1-deoxy-D-xylulose-5-phosphate synthase (629 aa).

Residues His-72 and 113 to 115 (GHA) contribute to the thiamine diphosphate site. Asp-144 contacts Mg(2+). Thiamine diphosphate-binding positions include 145-146 (GA), Asn-174, Tyr-287, and Glu-370. Mg(2+) is bound at residue Asn-174.

Belongs to the transketolase family. DXPS subfamily. As to quaternary structure, homodimer. The cofactor is Mg(2+). Thiamine diphosphate serves as cofactor.

It carries out the reaction D-glyceraldehyde 3-phosphate + pyruvate + H(+) = 1-deoxy-D-xylulose 5-phosphate + CO2. It participates in metabolic intermediate biosynthesis; 1-deoxy-D-xylulose 5-phosphate biosynthesis; 1-deoxy-D-xylulose 5-phosphate from D-glyceraldehyde 3-phosphate and pyruvate: step 1/1. Its function is as follows. Catalyzes the acyloin condensation reaction between C atoms 2 and 3 of pyruvate and glyceraldehyde 3-phosphate to yield 1-deoxy-D-xylulose-5-phosphate (DXP). The sequence is that of 1-deoxy-D-xylulose-5-phosphate synthase from Prochlorococcus marinus (strain MIT 9301).